Here is a 198-residue protein sequence, read N- to C-terminus: 8-oxoguanine DNA glycosylase/AP lyase (198 aa).

Active-site residues include K122 and D140.

Belongs to the type-2 OGG1 family. As to quaternary structure, monomer.

It carries out the reaction 2'-deoxyribonucleotide-(2'-deoxyribose 5'-phosphate)-2'-deoxyribonucleotide-DNA = a 3'-end 2'-deoxyribonucleotide-(2,3-dehydro-2,3-deoxyribose 5'-phosphate)-DNA + a 5'-end 5'-phospho-2'-deoxyribonucleoside-DNA + H(+). Catalyzes the excision of an oxidatively damaged form of guanine (7,8-dihydro-8-oxoguanine = 8-oxoG) from DNA. Also cleaves the DNA backbone at apurinic/apyrimidinic sites (AP sites). Efficiently cleaves oligomers containing 8-oxoG:C and 8-oxoG:G base pairs, and is less effective on oligomers containing 8-oxoG:T and 8-oxoG:A mispairs. This chain is 8-oxoguanine DNA glycosylase/AP lyase, found in Archaeoglobus fulgidus (strain ATCC 49558 / DSM 4304 / JCM 9628 / NBRC 100126 / VC-16).